The primary structure comprises 223 residues: Fibronectin type III domain-containing protein 10 (223 aa).

The signal sequence occupies residues 1-19; it reads MRAPPLLLLLAACAPPSGA. Residues 20–179 lie on the Extracellular side of the membrane; sequence AVDPTPPGWE…FTAEPAAMQE (160 aa). One can recognise a Fibronectin type-III domain in the interval 72-168; the sequence is LASAGGSLRA…VVPPELAECV (97 aa). N-linked (GlcNAc...) asparagine glycans are attached at residues Asn86 and Asn109. The helical transmembrane segment at 180–200 threads the bilayer; sequence IVVAMTAVGGSICVMLVVICL. Over 201-223 the chain is Cytoplasmic; sequence LVAYITENLMHPTFRRPSLRRQP.

The protein localises to the membrane. The chain is Fibronectin type III domain-containing protein 10 (Fndc10) from Mus musculus (Mouse).